The following is a 332-amino-acid chain: 2,3-diketo-L-gulonate reductase (332 aa).

Residue H44 is the Proton donor of the active site. NAD(+)-binding positions include 168-174 (ITMVDMS), 224-225 (WK), and 304-306 (GHE).

Belongs to the LDH2/MDH2 oxidoreductase family. DlgD subfamily. In terms of assembly, homodimer.

The protein localises to the cytoplasm. The catalysed reaction is 3-dehydro-L-gulonate + NAD(+) = 2,3-dioxo-L-gulonate + NADH + H(+). The enzyme catalyses 3-dehydro-L-gulonate + NADP(+) = 2,3-dioxo-L-gulonate + NADPH + H(+). Catalyzes the reduction of 2,3-diketo-L-gulonate in the presence of NADH, to form 3-keto-L-gulonate. The sequence is that of 2,3-diketo-L-gulonate reductase from Escherichia fergusonii (strain ATCC 35469 / DSM 13698 / CCUG 18766 / IAM 14443 / JCM 21226 / LMG 7866 / NBRC 102419 / NCTC 12128 / CDC 0568-73).